A 404-amino-acid polypeptide reads, in one-letter code: Tryptophan synthase beta chain (404 aa).

The residue at position 90 (lysine 90) is an N6-(pyridoxal phosphate)lysine.

Belongs to the TrpB family. As to quaternary structure, tetramer of two alpha and two beta chains. It depends on pyridoxal 5'-phosphate as a cofactor.

The catalysed reaction is (1S,2R)-1-C-(indol-3-yl)glycerol 3-phosphate + L-serine = D-glyceraldehyde 3-phosphate + L-tryptophan + H2O. The protein operates within amino-acid biosynthesis; L-tryptophan biosynthesis; L-tryptophan from chorismate: step 5/5. The beta subunit is responsible for the synthesis of L-tryptophan from indole and L-serine. The polypeptide is Tryptophan synthase beta chain (Geobacillus thermodenitrificans (strain NG80-2)).